A 520-amino-acid polypeptide reads, in one-letter code: GMP synthase [glutamine-hydrolyzing] (520 aa).

Residues 9-202 (KILILDFGSQ…VRKICGCSGQ (194 aa)) form the Glutamine amidotransferase type-1 domain. The active-site Nucleophile is the C86. Residues H176 and E178 contribute to the active site. The region spanning 203–395 (WTPGHIIDDA…LGLPHQMVWR (193 aa)) is the GMPS ATP-PPase domain. Residue 230-236 (SGGVDSS) participates in ATP binding.

As to quaternary structure, homodimer.

The enzyme catalyses XMP + L-glutamine + ATP + H2O = GMP + L-glutamate + AMP + diphosphate + 2 H(+). It participates in purine metabolism; GMP biosynthesis; GMP from XMP (L-Gln route): step 1/1. Catalyzes the synthesis of GMP from XMP. This chain is GMP synthase [glutamine-hydrolyzing], found in Geobacter metallireducens (strain ATCC 53774 / DSM 7210 / GS-15).